Reading from the N-terminus, the 358-residue chain is Uroporphyrinogen decarboxylase (358 aa).

Substrate-binding positions include 28–32 (RQAGR), D78, Y154, S208, and H324.

Belongs to the uroporphyrinogen decarboxylase family. As to quaternary structure, homodimer.

Its subcellular location is the cytoplasm. The enzyme catalyses uroporphyrinogen III + 4 H(+) = coproporphyrinogen III + 4 CO2. Its pathway is porphyrin-containing compound metabolism; protoporphyrin-IX biosynthesis; coproporphyrinogen-III from 5-aminolevulinate: step 4/4. Catalyzes the decarboxylation of four acetate groups of uroporphyrinogen-III to yield coproporphyrinogen-III. The sequence is that of Uroporphyrinogen decarboxylase from Acidiphilium cryptum (strain JF-5).